The chain runs to 273 residues: Ribosomal RNA small subunit methyltransferase A (273 aa).

Positions 18, 20, 45, 66, 91, and 113 each coordinate S-adenosyl-L-methionine.

This sequence belongs to the class I-like SAM-binding methyltransferase superfamily. rRNA adenine N(6)-methyltransferase family. RsmA subfamily.

It is found in the cytoplasm. The catalysed reaction is adenosine(1518)/adenosine(1519) in 16S rRNA + 4 S-adenosyl-L-methionine = N(6)-dimethyladenosine(1518)/N(6)-dimethyladenosine(1519) in 16S rRNA + 4 S-adenosyl-L-homocysteine + 4 H(+). Specifically dimethylates two adjacent adenosines (A1518 and A1519) in the loop of a conserved hairpin near the 3'-end of 16S rRNA in the 30S particle. May play a critical role in biogenesis of 30S subunits. This chain is Ribosomal RNA small subunit methyltransferase A, found in Enterobacter sp. (strain 638).